We begin with the raw amino-acid sequence, 66 residues long: DNA-binding protein 7d (66 aa).

N6-methyllysine; partial occurs at positions 5 and 7.

The protein belongs to the 7 kDa DNA-binding/endoribonuclease P2 family. Monomer. In terms of processing, lys-5 was 70% monomethylated in form 7a, 25% in form 7b, and 20% in form 7d. Lys-7 was 50% monomethylated in form 7a, 40% in form 7b, and 50% in form 7d.

The protein localises to the cytoplasm. In terms of biological role, can constrain negative DNA supercoils. May be involved in maintaining the integrity of the genome at high temperature. In Sulfolobus acidocaldarius (strain ATCC 33909 / DSM 639 / JCM 8929 / NBRC 15157 / NCIMB 11770), this protein is DNA-binding protein 7d.